Consider the following 411-residue polypeptide: MTTPFSSHGLLLLVGLCCLLLITKTKHEKLYEDPSIDPFQCRKVALTICNVSITLFKKMAQLSGNGNILFSPIRVIAAISMLSLGSNGNLSKHILETLRFNKTGLPEAEIHKCFWYLLHSIHQTEETSSLQTGSSVFIHQDLTSVDKFVKGVKELYHSDMISINFTDSSQAKTQINNYVMEISQKAIVNIVKNLESDTFLAVVNYIIWNAKLDSNFGCRSVKVKDYHLGYGMTIKVPMIHNMAMHYLFRVGDLSSTVLMLTLLTGNFATYFIIPDPGKMQKVEQSLTYPHFRRMRRQLLTRLVDLEIPELSLSETHDLESMMSLLGITYVFNSGTNSSDMNDTLQKSFKVVSKAVLTIDEKGSKPSTNSCFKKLGSTDMGRMQLNRPFLIFIQDHTNDVPLFLGRVVNPQN.

The signal sequence occupies residues 1 to 25 (MTTPFSSHGLLLLVGLCCLLLITKT). N-linked (GlcNAc...) asparagine glycosylation is found at N50, N89, N101, and N164.

This sequence belongs to the serpin family. As to expression, expressed predominantly in epididymis where it is found in the epithelial cells of the caput, corpus and cauda epididymis.

It is found in the secreted. In terms of biological role, inhibitor of serine proteases. This chain is Alpha-1-antitrypsin 1-6, found in Mus musculus (Mouse).